We begin with the raw amino-acid sequence, 179 residues long: Large ribosomal subunit protein uL5 (179 aa).

Belongs to the universal ribosomal protein uL5 family. In terms of assembly, part of the 50S ribosomal subunit; part of the 5S rRNA/L5/L18/L25 subcomplex. Contacts the 5S rRNA and the P site tRNA. Forms a bridge to the 30S subunit in the 70S ribosome.

Functionally, this is one of the proteins that bind and probably mediate the attachment of the 5S RNA into the large ribosomal subunit, where it forms part of the central protuberance. In the 70S ribosome it contacts protein S13 of the 30S subunit (bridge B1b), connecting the 2 subunits; this bridge is implicated in subunit movement. Contacts the P site tRNA; the 5S rRNA and some of its associated proteins might help stabilize positioning of ribosome-bound tRNAs. The chain is Large ribosomal subunit protein uL5 from Desulfatibacillum aliphaticivorans.